Here is an 898-residue protein sequence, read N- to C-terminus: DNA mismatch repair protein MutS (898 aa).

Gly-646–Ser-653 is an ATP binding site.

Belongs to the DNA mismatch repair MutS family.

This protein is involved in the repair of mismatches in DNA. It is possible that it carries out the mismatch recognition step. This protein has a weak ATPase activity. This is DNA mismatch repair protein MutS from Brucella ovis (strain ATCC 25840 / 63/290 / NCTC 10512).